Consider the following 734-residue polypeptide: Photosystem I P700 chlorophyll a apoprotein A2 (734 aa).

8 helical membrane passes run 46 to 69, 135 to 158, 175 to 199, 273 to 291, 330 to 353, 369 to 395, 417 to 439, and 517 to 535; these read IFAS…FHVA, LYTA…LHLQ, LNHH…HVAI, IAHH…GHQY, LHFQ…QHIY, AALY…IFFI, AIIS…LYVH, and FLVH…LILV. Residues Cys559 and Cys568 each contribute to the [4Fe-4S] cluster site. Helical transmembrane passes span 575-596 and 643-665; these read AFYL…YFHW and LGVW…MFLI. Residues His654, Met662, and Tyr670 each contribute to the chlorophyll a site. A phylloquinone-binding site is contributed by Trp671. A helical transmembrane segment spans residues 707–727; that stretch reads LVGLVHFSVGYVLTYGSFLIA.

It belongs to the PsaA/PsaB family. The PsaA/B heterodimer binds the P700 chlorophyll special pair and subsequent electron acceptors. PSI consists of a core antenna complex that captures photons, and an electron transfer chain that converts photonic excitation into a charge separation. The eukaryotic PSI reaction center is composed of at least 11 subunits. The cofactor is P700 is a chlorophyll a/chlorophyll a' dimer, A0 is one or more chlorophyll a, A1 is one or both phylloquinones and FX is a shared 4Fe-4S iron-sulfur center..

The protein localises to the plastid. The protein resides in the chloroplast thylakoid membrane. It carries out the reaction reduced [plastocyanin] + hnu + oxidized [2Fe-2S]-[ferredoxin] = oxidized [plastocyanin] + reduced [2Fe-2S]-[ferredoxin]. Its function is as follows. PsaA and PsaB bind P700, the primary electron donor of photosystem I (PSI), as well as the electron acceptors A0, A1 and FX. PSI is a plastocyanin/cytochrome c6-ferredoxin oxidoreductase, converting photonic excitation into a charge separation, which transfers an electron from the donor P700 chlorophyll pair to the spectroscopically characterized acceptors A0, A1, FX, FA and FB in turn. Oxidized P700 is reduced on the lumenal side of the thylakoid membrane by plastocyanin or cytochrome c6. The protein is Photosystem I P700 chlorophyll a apoprotein A2 of Oltmannsiellopsis viridis (Marine flagellate).